A 92-amino-acid polypeptide reads, in one-letter code: Large ribosomal subunit protein eL42 (92 aa).

Residues cysteine 11, cysteine 14, cysteine 70, and cysteine 73 each coordinate Zn(2+). A C4-type zinc finger spans residues cysteine 11–cysteine 73.

The protein belongs to the eukaryotic ribosomal protein eL42 family. In terms of assembly, part of the 50S ribosomal subunit. Zn(2+) serves as cofactor.

In terms of biological role, binds to the 23S rRNA. The sequence is that of Large ribosomal subunit protein eL42 from Methanothermobacter thermautotrophicus (strain ATCC 29096 / DSM 1053 / JCM 10044 / NBRC 100330 / Delta H) (Methanobacterium thermoautotrophicum).